A 233-amino-acid polypeptide reads, in one-letter code: Probable tetraheme cytochrome c-type (233 aa).

Residues 1-28 form the signal peptide; it reads MTRLQKGSIGTLLTGALLGIVLVAVVFG. 14 residues coordinate heme: cysteine 39, cysteine 42, methionine 45, cysteine 67, cysteine 70, histidine 71, glutamate 93, cysteine 131, cysteine 134, histidine 135, cysteine 159, cysteine 162, histidine 163, and histidine 168. Residues 182-233 are disordered; sequence QGKLVLKPEDDGDDEEADEDEDEETEEADDSSDSESASSSDNSDNEDDNNDE. Composition is skewed to acidic residues over residues 191-214 and 224-233; these read DDGDDEEADEDEDEETEEADDSSD and SDNEDDNNDE.

The protein belongs to the NapC/NirT/NrfH family. Binds 4 heme groups per subunit.

The protein resides in the periplasm. This Nitrosomonas europaea (strain ATCC 19718 / CIP 103999 / KCTC 2705 / NBRC 14298) protein is Probable tetraheme cytochrome c-type (cycX1).